The sequence spans 300 residues: Cysteine-rich venom protein (300 aa).

A signal peptide spans 1–21 (MLSTMQTVGAVLMLSIVLVAG). Positions 22-24 (RKR) are excised as a propeptide. The 122-residue stretch at 62 to 183 (LEMHNKIRAD…GNNKYFVCNY (122 aa)) folds into the SCP domain.

Post-translationally, contains 11 disulfide bonds. In terms of tissue distribution, expressed by the venom duct.

It localises to the secreted. Its function is as follows. Protease responsible for cleaving the conotoxins from their propeptide precursors. The target propeptide requires minimum four residues including a leucine N-terminal of the cleavage site for efficient substrate processing (example: Xaa-Xaa-Xaa-Leu-Asn-Lys-Arg-toxin). This Conus textile (Cloth-of-gold cone) protein is Cysteine-rich venom protein.